An 89-amino-acid chain; its full sequence is Small ribosomal subunit protein uS14 (89 aa).

This sequence belongs to the universal ribosomal protein uS14 family. In terms of assembly, part of the 30S ribosomal subunit. Contacts proteins S3 and S10.

In terms of biological role, binds 16S rRNA, required for the assembly of 30S particles and may also be responsible for determining the conformation of the 16S rRNA at the A site. The polypeptide is Small ribosomal subunit protein uS14 (Streptococcus pneumoniae serotype 2 (strain D39 / NCTC 7466)).